The primary structure comprises 467 residues: 6-phospho-beta-galactosidase (467 aa).

5 residues coordinate D-galactose 6-phosphate: Gln-19, His-116, Asn-159, Glu-160, and Asn-297. The Proton donor role is filled by Glu-160. Catalysis depends on Glu-375, which acts as the Nucleophile. Ser-428, Trp-429, Lys-435, and Tyr-437 together coordinate D-galactose 6-phosphate.

It belongs to the glycosyl hydrolase 1 family.

It catalyses the reaction a 6-phospho-beta-D-galactoside + H2O = D-galactose 6-phosphate + an alcohol. It functions in the pathway carbohydrate metabolism; lactose degradation; D-galactose 6-phosphate and beta-D-glucose from lactose 6-phosphate: step 1/1. With respect to regulation, inhibited by both galactose-6-phosphate and ATP. The polypeptide is 6-phospho-beta-galactosidase (Leptotrichia buccalis (strain ATCC 14201 / DSM 1135 / JCM 12969 / NCTC 10249 / C-1013-b)).